The chain runs to 376 residues: Palmitoyltransferase PFA4 (376 aa).

The Cytoplasmic portion of the chain corresponds to M1–G11. The chain crosses the membrane as a helical span at residues I12–L32. The Lumenal portion of the chain corresponds to N33–Q40. The helical transmembrane segment at L41–P61 threads the bilayer. Over P62–H122 the chain is Cytoplasmic. The DHHC domain occupies V78–F128. The active-site S-palmitoyl cysteine intermediate is C108. A helical transmembrane segment spans residues F123–T143. At R144–E163 the chain is on the lumenal side. A helical membrane pass occupies residues L164 to L184. At M185–E376 the chain is on the cytoplasmic side.

The protein belongs to the DHHC palmitoyltransferase family. PFA4 subfamily.

It localises to the endoplasmic reticulum membrane. The catalysed reaction is L-cysteinyl-[protein] + hexadecanoyl-CoA = S-hexadecanoyl-L-cysteinyl-[protein] + CoA. In terms of biological role, mediates the reversible addition of palmitate to target proteins, thereby regulating their membrane association and biological function. This Candida glabrata (strain ATCC 2001 / BCRC 20586 / JCM 3761 / NBRC 0622 / NRRL Y-65 / CBS 138) (Yeast) protein is Palmitoyltransferase PFA4.